The chain runs to 952 residues: Bifunctional ent-kaurene synthase (952 aa).

The short motif at 328–331 is the DXDD B-type cyclization motif element; that stretch reads DVDD. Mg(2+) contacts are provided by aspartate 668, glutamate 672, asparagine 848, aspartate 849, serine 852, and aspartate 856. Residues 668 to 672 carry the DEXXE A-type cyclization motif motif; sequence DEYME.

The protein belongs to the terpene synthase family. Mg(2+) serves as cofactor.

The catalysed reaction is ent-copalyl diphosphate = ent-kaur-16-ene + diphosphate. It carries out the reaction (2E,6E,10E)-geranylgeranyl diphosphate = ent-copalyl diphosphate. Its pathway is plant hormone biosynthesis; gibberellin biosynthesis. Functionally, bifunctional ent-kaurene synthase; part of the gene cluster that mediates the biosynthesis of gibberellins (GAs), diterpenoids that may provide a selective advantage during infection of the preferred host plant, rice. Gibberellins (GAs) are diterpenoids and are synthesized via the mevalonate pathway. Biosynthesis of the major metabolite GA3 (gibberellic acid) from geranylgeranyl diphosphate (GGPP) requires 13 steps. The GGPP produced by the geranylgeranyl diphosphate synthase GGS2 is converted to ent-kaurene via ent-copalyldiphosphate in a two-step cyclization reaction performed by the bifunctional ent-copalyl diphosphate synthase/ent-kaurene synthase enzyme (CPS/KS). Ent-Kaurene is metabolized to GAs by a series of oxidation reactions catalyzed by cytochrome P450 monooxygenases. Cytochrome P450 monooxygenase P450-4 is an ent-kaurene oxidase that catalyzes the three oxidation steps between ent-kaurene and ent-kaurenoic acid. The highly multifunctional cytochrome P450 monooxygenase P450-1 then catalyzes four steps involving oxidation at two carbon atoms, in the main pathway from ent-kaurenoic acid to GA14 via GA12-aldehyde as well as producing kaurenolides and fujenoic acids as by-products. The cytochrome P450 monooxygenase P450-2 then converts GA14 to GA4 by removal of C-20. GA4 is further converted to GA7 by the GA4 desaturase DES via 1,2-desaturation before cytochrome P450 monooxygenase P450-3, a 13-hydroxylase, hydroxylates GA7 to GA3, the final product of the GA-biosynthetic pathway. In Gibberella fujikuroi (strain CBS 195.34 / IMI 58289 / NRRL A-6831) (Bakanae and foot rot disease fungus), this protein is Bifunctional ent-kaurene synthase.